Reading from the N-terminus, the 301-residue chain is Protoheme IX farnesyltransferase (301 aa).

Transmembrane regions (helical) follow at residues 20 to 42, 55 to 75, 105 to 125, 126 to 146, 150 to 172, 176 to 198, 227 to 247, 249 to 269, and 280 to 300; these read FTEL…GMWL, VDVI…SGAF, ALMV…MTTW, QAGV…SLYA, LVSN…WFAV, FSMV…FYAI, MFFW…LGIV, VILA…GFKM, and FIYS…ISIF.

This sequence belongs to the UbiA prenyltransferase family. Protoheme IX farnesyltransferase subfamily. Interacts with CtaA.

Its subcellular location is the cell membrane. The enzyme catalyses heme b + (2E,6E)-farnesyl diphosphate + H2O = Fe(II)-heme o + diphosphate. The protein operates within porphyrin-containing compound metabolism; heme O biosynthesis; heme O from protoheme: step 1/1. Functionally, converts heme B (protoheme IX) to heme O by substitution of the vinyl group on carbon 2 of heme B porphyrin ring with a hydroxyethyl farnesyl side group. This chain is Protoheme IX farnesyltransferase, found in Listeria welshimeri serovar 6b (strain ATCC 35897 / DSM 20650 / CCUG 15529 / CIP 8149 / NCTC 11857 / SLCC 5334 / V8).